The primary structure comprises 129 residues: Small ribosomal subunit protein uS11 (129 aa).

This sequence belongs to the universal ribosomal protein uS11 family. In terms of assembly, part of the 30S ribosomal subunit. Interacts with proteins S7 and S18. Binds to IF-3.

Its function is as follows. Located on the platform of the 30S subunit, it bridges several disparate RNA helices of the 16S rRNA. Forms part of the Shine-Dalgarno cleft in the 70S ribosome. This is Small ribosomal subunit protein uS11 from Cereibacter sphaeroides (strain ATCC 17025 / ATH 2.4.3) (Rhodobacter sphaeroides).